Reading from the N-terminus, the 390-residue chain is NADH-quinone oxidoreductase subunit D (390 aa).

It belongs to the complex I 49 kDa subunit family. As to quaternary structure, NDH-1 is composed of 14 different subunits. Subunits NuoB, C, D, E, F, and G constitute the peripheral sector of the complex.

The protein localises to the cell inner membrane. The enzyme catalyses a quinone + NADH + 5 H(+)(in) = a quinol + NAD(+) + 4 H(+)(out). NDH-1 shuttles electrons from NADH, via FMN and iron-sulfur (Fe-S) centers, to quinones in the respiratory chain. The immediate electron acceptor for the enzyme in this species is believed to be ubiquinone. Couples the redox reaction to proton translocation (for every two electrons transferred, four hydrogen ions are translocated across the cytoplasmic membrane), and thus conserves the redox energy in a proton gradient. The protein is NADH-quinone oxidoreductase subunit D of Geobacter sulfurreducens (strain ATCC 51573 / DSM 12127 / PCA).